The sequence spans 87 residues: MSQADFDKAAEEVKRLKTQPTDEEMLFIYSHFKQATVGDVNTDRPGLLDLKGKAKWDSWNKLKGTSKENAMKTYVEKVEELKKKYGI.

The residue at position 2 (S2) is an N-acetylserine. The 86-residue stretch at 2–87 folds into the ACB domain; the sequence is SQADFDKAAE…VEELKKKYGI (86 aa). K8 is subject to N6-acetyllysine; alternate. K8 is subject to N6-succinyllysine; alternate. Position 14 (K14) interacts with an acyl-CoA. K17 carries the post-translational modification N6-succinyllysine. At Y29 the chain carries Phosphotyrosine. Residues 29-33, K51, K55, and Y74 contribute to the an acyl-CoA site; that span reads YSHFK. K51 is modified (N6-acetyllysine). N6-acetyllysine; alternate is present on K55. K55 bears the N6-succinyllysine; alternate mark. K55 carries the N6-(2-hydroxyisobutyryl)lysine; alternate modification. The residue at position 55 (K55) is an N6-malonyllysine; alternate. The residue at position 77 (K77) is an N6-acetyllysine; alternate. Residue K77 is modified to N6-succinyllysine; alternate.

The protein belongs to the ACBP family. Monomer.

It is found in the endoplasmic reticulum. Its subcellular location is the golgi apparatus. In terms of biological role, binds medium- and long-chain acyl-CoA esters with very high affinity and may function as an intracellular carrier of acyl-CoA esters. It is also able to displace diazepam from the benzodiazepine (BZD) recognition site located on the GABA type A receptor. It is therefore possible that this protein also acts as a neuropeptide to modulate the action of the GABA receptor. The sequence is that of Acyl-CoA-binding protein (Dbi) from Rattus norvegicus (Rat).